A 332-amino-acid polypeptide reads, in one-letter code: Thiosulfate-binding protein (332 aa).

A signal peptide spans 1–22; the sequence is MKRLFSASLLAAGLALGGAAHA.

The protein belongs to the prokaryotic sulfate-binding protein family.

It localises to the periplasm. In terms of biological role, binds thiosulfate specifically and with high affinity. Has no detectable affinity for sulfate. The sequence is that of Thiosulfate-binding protein from Pseudomonas aeruginosa (strain ATCC 15692 / DSM 22644 / CIP 104116 / JCM 14847 / LMG 12228 / 1C / PRS 101 / PAO1).